The primary structure comprises 296 residues: Tyrosine recombinase XerC (296 aa).

The Core-binding (CB) domain occupies 1-84 (MEKIQQAYLY…TLRSFYEYWM (84 aa)). The Tyr recombinase domain maps to 105–286 (YLPHFFYEEE…TNEQLRKVYL (182 aa)). Active-site residues include arginine 145, lysine 169, histidine 238, arginine 241, and histidine 264. Tyrosine 273 functions as the O-(3'-phospho-DNA)-tyrosine intermediate in the catalytic mechanism.

This sequence belongs to the 'phage' integrase family. XerC subfamily. Forms a cyclic heterotetrameric complex composed of two molecules of XerC and two molecules of XerD.

It is found in the cytoplasm. Site-specific tyrosine recombinase, which acts by catalyzing the cutting and rejoining of the recombining DNA molecules. The XerC-XerD complex is essential to convert dimers of the bacterial chromosome into monomers to permit their segregation at cell division. It also contributes to the segregational stability of plasmids. This Staphylococcus saprophyticus subsp. saprophyticus (strain ATCC 15305 / DSM 20229 / NCIMB 8711 / NCTC 7292 / S-41) protein is Tyrosine recombinase XerC.